We begin with the raw amino-acid sequence, 472 residues long: GTPase HflX (472 aa).

Positions 1–21 (MDTIDTPGEQGSQSFGNSLGA) are disordered. The Hflx-type G domain occupies 230 to 396 (PTFALIGYTN…LMTEIIQEKS (167 aa)). GTP-binding positions include 236–243 (GYTNSGKS), 261–265 (FATLD), 283–286 (DTVG), 349–352 (NKVD), and 374–376 (SAK). Positions 243 and 263 each coordinate Mg(2+).

It belongs to the TRAFAC class OBG-HflX-like GTPase superfamily. HflX GTPase family. In terms of assembly, monomer. Associates with the 50S ribosomal subunit. Requires Mg(2+) as cofactor.

Its subcellular location is the cytoplasm. Its function is as follows. GTPase that associates with the 50S ribosomal subunit and may have a role during protein synthesis or ribosome biogenesis. Specific for GTP. This chain is GTPase HflX, found in Chlamydia pneumoniae (Chlamydophila pneumoniae).